Consider the following 613-residue polypeptide: Sulfhydryl oxidase 1 (613 aa).

A signal peptide spans 1 to 30 (MTGCGRRSGWLPPLRLLLLPLLLGGPGVGA). Positions 37–157 (YSASDPLTLL…RERLIDALES (121 aa)) constitute a Thioredoxin domain. Active-site nucleophile residues include Cys71 and Cys74. Disulfide bonds link Cys71/Cys74 and Cys102/Cys111. N-linked (GlcNAc...) asparagine glycans are attached at residues Asn131 and Asn244. Cysteines 394 and 406 form a disulfide. Positions 397-504 (SESHFRGFPC…EDPQFPKVQW (108 aa)) constitute an ERV/ALR sulfhydryl oxidase domain. 3 residues coordinate FAD: Arg402, Trp409, and His413. Ser427 carries the phosphoserine modification. Cys450 and Cys453 are oxidised to a cystine. Residues Asp452, His456, 479 to 486 (WTSHNRVN), Lys501, and Trp504 each bind FAD. An intrachain disulfide couples Cys510 to Cys513.

The protein belongs to the quiescin-sulfhydryl oxidase (QSOX) family. As to quaternary structure, monomer. FAD serves as cofactor. N-glycosylated. O-glycosylated on Thr and Ser residues. As to expression, detected in endometrium and in uterus glandular epithelial cells (at protein level). Expressed in testis, placenta, pancreas, lung, ovary, endometrium, but not in brain, liver and kidney tissues. Higher expression in epithelial cells.

Its subcellular location is the secreted. The catalysed reaction is 2 R'C(R)SH + O2 = R'C(R)S-S(R)CR' + H2O2. Catalyzes the oxidation of sulfhydryl groups in peptide and protein thiols to disulfides with the reduction of oxygen to hydrogen peroxide. Plays a role in disulfide bond formation in a variety of extracellular proteins. In fibroblasts, required for normal incorporation of laminin into the extracellular matrix, and thereby for normal cell-cell adhesion and cell migration. In Cavia porcellus (Guinea pig), this protein is Sulfhydryl oxidase 1 (QSOX1).